Consider the following 914-residue polypeptide: Valine--tRNA ligase (914 aa).

Positions 45–55 (PNVTGSLHMGH) match the 'HIGH' region motif. Residues 538 to 542 (KMSKS) carry the 'KMSKS' region motif. Lys-541 is a binding site for ATP. A coiled-coil region spans residues 847-914 (LVDLDALKGR…LARKRLADLS (68 aa)).

It belongs to the class-I aminoacyl-tRNA synthetase family. ValS type 1 subfamily. In terms of assembly, monomer.

Its subcellular location is the cytoplasm. It catalyses the reaction tRNA(Val) + L-valine + ATP = L-valyl-tRNA(Val) + AMP + diphosphate. Functionally, catalyzes the attachment of valine to tRNA(Val). As ValRS can inadvertently accommodate and process structurally similar amino acids such as threonine, to avoid such errors, it has a 'posttransfer' editing activity that hydrolyzes mischarged Thr-tRNA(Val) in a tRNA-dependent manner. In Parasynechococcus marenigrum (strain WH8102), this protein is Valine--tRNA ligase.